The following is a 373-amino-acid chain: Cell division protein FtsZ 1 (373 aa).

GTP-binding positions include 51-55 (GAGCN), 138-140 (GTG), E169, R173, and D216. The segment at 354–373 (EESYFGEEERRPIKLDLDEL) is disordered. Positions 360–373 (EEERRPIKLDLDEL) are enriched in basic and acidic residues.

This sequence belongs to the FtsZ family. As to quaternary structure, homodimer. Polymerizes to form a dynamic ring structure in a strictly GTP-dependent manner. Interacts directly with several other division proteins.

The protein localises to the cytoplasm. Its function is as follows. Essential cell division protein that forms a contractile ring structure (Z ring) at the future cell division site. The regulation of the ring assembly controls the timing and the location of cell division. One of the functions of the FtsZ ring is to recruit other cell division proteins to the septum to produce a new cell wall between the dividing cells. Binds GTP and shows GTPase activity. The polypeptide is Cell division protein FtsZ 1 (Thermococcus kodakarensis (strain ATCC BAA-918 / JCM 12380 / KOD1) (Pyrococcus kodakaraensis (strain KOD1))).